Here is a 219-residue protein sequence, read N- to C-terminus: Small ribosomal subunit protein uS3 (219 aa).

One can recognise a KH type-2 domain in the interval 38 to 107 (IREYIENKMK…RVHINVVEVK (70 aa)).

The protein belongs to the universal ribosomal protein uS3 family. In terms of assembly, part of the 30S ribosomal subunit. Forms a tight complex with proteins S10 and S14.

In terms of biological role, binds the lower part of the 30S subunit head. Binds mRNA in the 70S ribosome, positioning it for translation. This chain is Small ribosomal subunit protein uS3, found in Exiguobacterium sp. (strain ATCC BAA-1283 / AT1b).